Reading from the N-terminus, the 334-residue chain is Ketol-acid reductoisomerase (NADP(+)) (334 aa).

One can recognise a KARI N-terminal Rossmann domain in the interval 2 to 181; it reads TKVYYDETVT…GATRAGVIET (180 aa). Residues 25 to 28, arginine 48, serine 52, and 82 to 85 each bind NADP(+); these read YGSQ and DEIQ. Histidine 107 is an active-site residue. Residue glycine 133 coordinates NADP(+). Residues 182–327 form the KARI C-terminal knotted domain; sequence TFKEETETDL…RELREMMPFI (146 aa). Residues aspartate 190, glutamate 194, glutamate 226, and glutamate 230 each contribute to the Mg(2+) site. Residue serine 251 coordinates substrate.

Belongs to the ketol-acid reductoisomerase family. Requires Mg(2+) as cofactor.

It carries out the reaction (2R)-2,3-dihydroxy-3-methylbutanoate + NADP(+) = (2S)-2-acetolactate + NADPH + H(+). The catalysed reaction is (2R,3R)-2,3-dihydroxy-3-methylpentanoate + NADP(+) = (S)-2-ethyl-2-hydroxy-3-oxobutanoate + NADPH + H(+). The protein operates within amino-acid biosynthesis; L-isoleucine biosynthesis; L-isoleucine from 2-oxobutanoate: step 2/4. Its pathway is amino-acid biosynthesis; L-valine biosynthesis; L-valine from pyruvate: step 2/4. Functionally, involved in the biosynthesis of branched-chain amino acids (BCAA). Catalyzes an alkyl-migration followed by a ketol-acid reduction of (S)-2-acetolactate (S2AL) to yield (R)-2,3-dihydroxy-isovalerate. In the isomerase reaction, S2AL is rearranged via a Mg-dependent methyl migration to produce 3-hydroxy-3-methyl-2-ketobutyrate (HMKB). In the reductase reaction, this 2-ketoacid undergoes a metal-dependent reduction by NADPH to yield (R)-2,3-dihydroxy-isovalerate. This Staphylococcus epidermidis (strain ATCC 35984 / DSM 28319 / BCRC 17069 / CCUG 31568 / BM 3577 / RP62A) protein is Ketol-acid reductoisomerase (NADP(+)).